Reading from the N-terminus, the 131-residue chain is Cystatin-like cysteine protease inhibitor EPIC3 (131 aa).

The signal sequence occupies residues 1–20; that stretch reads MAFTRSIALFAGLALAASSA. N-linked (GlcNAc...) asparagine glycosylation is present at Asn-33. The Secondary area of contact motif lies at 71–75; that stretch reads QTVAG.

The protein belongs to the cystatin family.

The protein resides in the secreted. Secreted effector that interacts with and inhibits host apoplastic pathogenesis-related papain-like cysteine proteases. Inhibition of host proteases by a pathogen extracellular protease inhibitor forms a specific type of defense-counterdefense mechanism between plants and microbial pathogens. This chain is Cystatin-like cysteine protease inhibitor EPIC3, found in Phytophthora infestans (Potato late blight agent).